A 379-amino-acid chain; its full sequence is F-box/kelch-repeat protein At4g33900 (379 aa).

The 47-residue stretch at 9-55 (IKRFLMLPDDLVFNCLARVSRLHYPTLSLVSKKFRFLLASKELYQTR) folds into the F-box domain. Kelch repeat units lie at residues 116–175 (EIYA…TLDG), 176–222 (RIYV…LSIS), and 262–308 (SCCV…RNFK).

The polypeptide is F-box/kelch-repeat protein At4g33900 (Arabidopsis thaliana (Mouse-ear cress)).